A 131-amino-acid polypeptide reads, in one-letter code: (R)-mandelonitrile lyase (131 aa).

A Cupin type-2 domain is found at 42–104 (VTFEPGARTA…WHGAAPTTAM (63 aa)). Positions 53, 55, 59, 94, and 96 each coordinate Mn(2+).

This sequence belongs to the cupin domain-containing hydroxynitrile lyase family. Requires Mn(2+) as cofactor.

The catalysed reaction is (R)-mandelonitrile = benzaldehyde + hydrogen cyanide. Its function is as follows. Hydroxynitrile lyase which catalyzes mandelonitrile formation from benzaldehyde and hydrogen cyanide with high stereoselectivity in presence of manganese. This is (R)-mandelonitrile lyase from Granulicella tundricola (strain ATCC BAA-1859 / DSM 23138 / MP5ACTX9).